The sequence spans 594 residues: (E)-beta-ocimene synthase TPS6FN (594 aa).

Residues Arg303, Asp340, Asp344, Arg489, and Asn492 each contribute to the (2E)-geranyl diphosphate site. Residues Asp340 and Asp344 each coordinate Mg(2+). Residues 340–344 carry the DDXXD motif motif; the sequence is DDIYD. Positions 492, 496, and 500 each coordinate Mg(2+).

It belongs to the terpene synthase family. Tpsb subfamily. It depends on Mg(2+) as a cofactor. The cofactor is Mn(2+). As to expression, expressed in glandular trichomes two to four weeks after flowering onset.

The catalysed reaction is (2E)-geranyl diphosphate = (E)-beta-ocimene + diphosphate. It carries out the reaction (2E)-geranyl diphosphate = (Z)-beta-ocimene + diphosphate. The protein operates within secondary metabolite biosynthesis; terpenoid biosynthesis. Involved in monoterpene (C10) olefins biosynthesis, constituants of cannabinoids and terpenoids-rich resins. Catalyzes mainly the conversion of (2E)-geranyl diphosphate to (E)-beta-ocimene, and also produces minor products such as (Z)-beta-ocimene. The chain is (E)-beta-ocimene synthase TPS6FN from Cannabis sativa (Hemp).